The chain runs to 445 residues: Elongation factor 1-alpha (445 aa).

One can recognise a tr-type G domain in the interval 5–230; that stretch reads KVHISLVVIG…DNLEPPKRPS (226 aa). Residues 14–21 are G1; it reads GHVDSGKS. Position 14–21 (14–21) interacts with GTP; the sequence is GHVDSGKS. An N6,N6-dimethyllysine modification is found at lysine 55. A G2 region spans residues 70 to 74; the sequence is CITID. Lysine 79 carries the post-translational modification N6,N6,N6-trimethyllysine. Residues 91–94 form a G3 region; it reads DAPG. GTP-binding positions include 91 to 95 and 153 to 156; these read DAPGH and NKFD. The tract at residues 153–156 is G4; that stretch reads NKFD. Position 187 is an N6,N6,N6-trimethyllysine (lysine 187). The tract at residues 194 to 196 is G5; sequence SGW. Position 261 is an N6-methyllysine (lysine 261). N6,N6,N6-trimethyllysine occurs at positions 306 and 396.

Belongs to the TRAFAC class translation factor GTPase superfamily. Classic translation factor GTPase family. EF-Tu/EF-1A subfamily.

The protein localises to the cytoplasm. Functionally, this protein promotes the GTP-dependent binding of aminoacyl-tRNA to the A-site of ribosomes during protein biosynthesis. The polypeptide is Elongation factor 1-alpha (TEF) (Euglena gracilis).